Consider the following 529-residue polypeptide: Low affinity inorganic phosphate transporter 4 (529 aa).

Residues 1–21 (MASDNLVVLNALDTARTQWYH) lie on the Cytoplasmic side of the membrane. A helical transmembrane segment spans residues 22–42 (VTAVIIAGMGFFTDAYDLFCI). Over 43-71 (STVSKLLGRLYYYDPSTKAPGKLPHMANN) the chain is Extracellular. A helical membrane pass occupies residues 72–92 (WVIGVALVGTLSGQLVFGWLG). Residues 93–99 (DKLGRKK) are Cytoplasmic-facing. The helical transmembrane segment at 100–120 (VYGLTLILMVICALCSGLSLG) threads the bilayer. Residues 121–125 (YSPKS) lie on the Extracellular side of the membrane. A helical transmembrane segment spans residues 126–146 (VIGTLCFFRFWLGFGIGGDYP). Residues 147–161 (LSATIMSEYANKSTR) are Cytoplasmic-facing. The chain crosses the membrane as a helical span at residues 162-182 (GAFIAAVFAMQGVGIIFAGLV). At 183–211 (SMTISKVFLMNFEGKPFNVDEVLSTEPEA) the chain is on the extracellular side. The chain crosses the membrane as a helical span at residues 212-232 (DYVWRIVLMLGALPALLTYYW). The Cytoplasmic portion of the chain corresponds to 233-291 (RMKMPETGRYTAIIEGNAKQAAIDMGKVLDIEIQAEGDKLAQFKAANEYSLLSNEFFQR). The helical transmembrane segment at 292–312 (HGLHLIGTMSTWFLLDIAFYS) threads the bilayer. Topologically, residues 313 to 344 (QNLTQKDIFPVMGLTSKANTISALREMFETSR) are extracellular. N314 is a glycosylation site (N-linked (GlcNAc...) asparagine). Residues 345–365 (AMFVIALFGTFPGYWFTVFFI) traverse the membrane as a helical segment. Residues 366-374 (EKIGRFKIQ) are Cytoplasmic-facing. The chain crosses the membrane as a helical span at residues 375 to 395 (LVGFFMMSVFMAIIGVKYDYL). The Extracellular portion of the chain corresponds to 396–405 (RNKEHKWTFA). A helical transmembrane segment spans residues 406 to 426 (ALYGLTFFFANFGPNSTTFVL). Residues 427 to 437 (PAELFPTRVRS) are Cytoplasmic-facing. Residues 438–458 (TCHALSAALGKAGAMISAFGI) traverse the membrane as a helical segment. The Extracellular portion of the chain corresponds to 459 to 471 (QQYTQDQDVRKIK). A helical transmembrane segment spans residues 472 to 492 (TAMLLLAFTNMVGFCCTFLVT). Residues 493 to 529 (ETKGRSLEEISGEDGRQNETQMKTTRPVSGHPDDGWE) are Cytoplasmic-facing. Residues 501–529 (EISGEDGRQNETQMKTTRPVSGHPDDGWE) are disordered. Positions 510–519 (NETQMKTTRP) are enriched in polar residues.

This sequence belongs to the major facilitator superfamily. Phosphate:H(+) symporter (TC 2.A.1.9) family.

It localises to the cell membrane. The catalysed reaction is phosphate(in) + H(+)(in) = phosphate(out) + H(+)(out). Functionally, low-affinity transporter for external inorganic phosphate (Pi) probably involved in the acquisition of phosphate released by arbuscular mycorrhizal (AM) fungi (e.g. Rhizophagus irregularis and Glomus intraradices) during AM symbiosis. Acts as a Pi-sensing machinery at the root tip level, independently of AM fungi, involved in the regulation of early root branching and lateral roots formation. In Petunia hybrida (Petunia), this protein is Low affinity inorganic phosphate transporter 4.